The following is a 272-amino-acid chain: 5'-AMP-activated protein kinase subunit beta-2 (272 aa).

Residues 1–52 (MGNTTSDRVSGERHGAKAARSEGAGGHAPGKEHKIMVGSTDDPSVFSLPDSK) are disordered. S39 is modified (phosphoserine). At T40 the chain carries Phosphothreonine. A Phosphoserine; by ULK1 modification is found at S69. A phosphoserine mark is found at S95 and S108. T148 carries the phosphothreonine modification. Phosphoserine occurs at positions 158, 170, 174, and 184.

This sequence belongs to the 5'-AMP-activated protein kinase beta subunit family. In terms of assembly, AMPK is a heterotrimer of an alpha catalytic subunit (PRKAA1 or PRKAA2), a beta (PRKAB1 or PRKAB2) and a gamma non-catalytic subunits (PRKAG1, PRKAG2 or PRKAG3). In terms of processing, phosphorylated when associated with the catalytic subunit (PRKAA1 or PRKAA2). Phosphorylated by ULK1 and ULK2; leading to negatively regulate AMPK activity and suggesting the existence of a regulatory feedback loop between ULK1, ULK2 and AMPK.

Non-catalytic subunit of AMP-activated protein kinase (AMPK), an energy sensor protein kinase that plays a key role in regulating cellular energy metabolism. In response to reduction of intracellular ATP levels, AMPK activates energy-producing pathways and inhibits energy-consuming processes: inhibits protein, carbohydrate and lipid biosynthesis, as well as cell growth and proliferation. AMPK acts via direct phosphorylation of metabolic enzymes, and by longer-term effects via phosphorylation of transcription regulators. Also acts as a regulator of cellular polarity by remodeling the actin cytoskeleton; probably by indirectly activating myosin. Beta non-catalytic subunit acts as a scaffold on which the AMPK complex assembles, via its C-terminus that bridges alpha (PRKAA1 or PRKAA2) and gamma subunits (PRKAG1, PRKAG2 or PRKAG3). The sequence is that of 5'-AMP-activated protein kinase subunit beta-2 (PRKAB2) from Homo sapiens (Human).